A 371-amino-acid chain; its full sequence is uncharacterized protein (371 aa).

In terms of domain architecture, EH spans 43-148 (DESRVPKFYL…VQAFPTASNP (106 aa)). The tract at residues 179–205 (SMRKKKESDSKEVSAHNSPAKGAAHDL) is disordered.

This is an uncharacterized protein from Caenorhabditis elegans.